We begin with the raw amino-acid sequence, 438 residues long: Enolase (438 aa).

Q164 is a (2R)-2-phosphoglycerate binding site. The active-site Proton donor is the E206. Mg(2+) is bound by residues D243, E289, and D316. Residues K341, R370, S371, and K392 each contribute to the (2R)-2-phosphoglycerate site. K341 (proton acceptor) is an active-site residue.

The protein belongs to the enolase family. Requires Mg(2+) as cofactor.

The protein localises to the cytoplasm. Its subcellular location is the secreted. It localises to the cell surface. It carries out the reaction (2R)-2-phosphoglycerate = phosphoenolpyruvate + H2O. Its pathway is carbohydrate degradation; glycolysis; pyruvate from D-glyceraldehyde 3-phosphate: step 4/5. Its function is as follows. Catalyzes the reversible conversion of 2-phosphoglycerate (2-PG) into phosphoenolpyruvate (PEP). It is essential for the degradation of carbohydrates via glycolysis. This is Enolase from Borrelia garinii subsp. bavariensis (strain ATCC BAA-2496 / DSM 23469 / PBi) (Borreliella bavariensis).